Consider the following 192-residue polypeptide: uncharacterized protein (192 aa).

In terms of domain architecture, Nudix hydrolase spans 29–160; that stretch reads QRQAAVLVPV…PLDIHRRGNH (132 aa). The Nudix box signature appears at 67 to 89; the sequence is GAVDDTDASLIAAALREAQEEVA. Mg(2+)-binding residues include Glu83 and Glu87.

Belongs to the Nudix hydrolase family. PCD1 subfamily. The cofactor is Mn(2+). Mg(2+) serves as cofactor.

In terms of biological role, probably mediates the hydrolysis of some nucleoside diphosphate derivatives. This is an uncharacterized protein from Cronobacter sakazakii (strain ATCC BAA-894) (Enterobacter sakazakii).